We begin with the raw amino-acid sequence, 335 residues long: Pyridoxal 5'-phosphate synthase subunit PdxS (335 aa).

Asp59 lines the D-ribose 5-phosphate pocket. The active-site Schiff-base intermediate with D-ribose 5-phosphate is Lys116. Gly188 serves as a coordination point for D-ribose 5-phosphate. Position 200 (Lys200) interacts with D-glyceraldehyde 3-phosphate. Residues Gly253 and 274-275 each bind D-ribose 5-phosphate; that span reads GS.

The protein belongs to the PdxS/SNZ family. As to quaternary structure, in the presence of PdxT, forms a dodecamer of heterodimers.

The catalysed reaction is aldehydo-D-ribose 5-phosphate + D-glyceraldehyde 3-phosphate + L-glutamine = pyridoxal 5'-phosphate + L-glutamate + phosphate + 3 H2O + H(+). It participates in cofactor biosynthesis; pyridoxal 5'-phosphate biosynthesis. In terms of biological role, catalyzes the formation of pyridoxal 5'-phosphate from ribose 5-phosphate (RBP), glyceraldehyde 3-phosphate (G3P) and ammonia. The ammonia is provided by the PdxT subunit. Can also use ribulose 5-phosphate and dihydroxyacetone phosphate as substrates, resulting from enzyme-catalyzed isomerization of RBP and G3P, respectively. This Hyperthermus butylicus (strain DSM 5456 / JCM 9403 / PLM1-5) protein is Pyridoxal 5'-phosphate synthase subunit PdxS.